Consider the following 346-residue polypeptide: Probable 3-hydroxyacyl-CoA dehydrogenase (346 aa).

The tract at residues 322–346 (RANLSPSATPCTPWKARKATSCAPP) is disordered.

Belongs to the 3-hydroxyacyl-CoA dehydrogenase family.

The catalysed reaction is a (3S)-3-hydroxyacyl-CoA + NAD(+) = a 3-oxoacyl-CoA + NADH + H(+). This chain is Probable 3-hydroxyacyl-CoA dehydrogenase, found in Deinococcus radiodurans (strain ATCC 13939 / DSM 20539 / JCM 16871 / CCUG 27074 / LMG 4051 / NBRC 15346 / NCIMB 9279 / VKM B-1422 / R1).